The chain runs to 334 residues: UDP-N-acetylenolpyruvoylglucosamine reductase (334 aa).

The FAD-binding PCMH-type domain maps to 16 to 186 (INVFAKKIII…LSVGIKLPKT (171 aa)). Arg162 is an active-site residue. Catalysis depends on Ser232, which acts as the Proton donor. Residue Glu329 is part of the active site.

Belongs to the MurB family. FAD is required as a cofactor.

Its subcellular location is the cytoplasm. It carries out the reaction UDP-N-acetyl-alpha-D-muramate + NADP(+) = UDP-N-acetyl-3-O-(1-carboxyvinyl)-alpha-D-glucosamine + NADPH + H(+). It participates in cell wall biogenesis; peptidoglycan biosynthesis. In terms of biological role, cell wall formation. This Buchnera aphidicola subsp. Baizongia pistaciae (strain Bp) protein is UDP-N-acetylenolpyruvoylglucosamine reductase.